A 101-amino-acid chain; its full sequence is MFDQTTQPEAHQLTVGKIETANGTIKPQLLRDAVKRAVTNFFAQMDGQEAEEVYEMVLCEVEAPLLDIIMQHTRGNQTRAANMLGINRGTLRKKLKKYGMN.

The segment at residues 77–96 (QTRAANMLGINRGTLRKKLK) is a DNA-binding region (H-T-H motif).

It belongs to the transcriptional regulatory Fis family. As to quaternary structure, homodimer.

Activates ribosomal RNA transcription. Plays a direct role in upstream activation of rRNA promoters. This is DNA-binding protein Fis from Shewanella loihica (strain ATCC BAA-1088 / PV-4).